The sequence spans 382 residues: Fimbrial usher domain-containing protein YdeT (382 aa).

The sequence is that of Fimbrial usher domain-containing protein YdeT (ydeT) from Escherichia coli O157:H7.